The chain runs to 205 residues: High frequency lysogenization protein HflD homolog (205 aa).

This sequence belongs to the HflD family.

Its subcellular location is the cytoplasm. The protein resides in the cell inner membrane. The sequence is that of High frequency lysogenization protein HflD homolog from Haemophilus influenzae (strain 86-028NP).